Consider the following 122-residue polypeptide: MSITKDQILEAFAAMSVMEVVELIEAMEEKFGVSAAAAVVSGGGEAAAAVEEQTEFNVILTAHGDNKVAVIKAIRGATGLGLKEAKAMSEAAPVAVKEGVSKEEAEALKKELVEAGASVEIK.

It belongs to the bacterial ribosomal protein bL12 family. Homodimer. Part of the ribosomal stalk of the 50S ribosomal subunit. Forms a multimeric L10(L12)X complex, where L10 forms an elongated spine to which 2 to 4 L12 dimers bind in a sequential fashion. Binds GTP-bound translation factors.

Functionally, forms part of the ribosomal stalk which helps the ribosome interact with GTP-bound translation factors. Is thus essential for accurate translation. The sequence is that of Large ribosomal subunit protein bL12 from Shewanella putrefaciens (strain CN-32 / ATCC BAA-453).